Reading from the N-terminus, the 399-residue chain is Nicotinate phosphoribosyltransferase (399 aa).

Phosphohistidine; by autocatalysis is present on His217.

It belongs to the NAPRTase family. In terms of processing, transiently phosphorylated on a His residue during the reaction cycle. Phosphorylation strongly increases the affinity for substrates and increases the rate of nicotinate D-ribonucleotide production. Dephosphorylation regenerates the low-affinity form of the enzyme, leading to product release.

It catalyses the reaction nicotinate + 5-phospho-alpha-D-ribose 1-diphosphate + ATP + H2O = nicotinate beta-D-ribonucleotide + ADP + phosphate + diphosphate. It functions in the pathway cofactor biosynthesis; NAD(+) biosynthesis; nicotinate D-ribonucleotide from nicotinate: step 1/1. Its function is as follows. Catalyzes the synthesis of beta-nicotinate D-ribonucleotide from nicotinate and 5-phospho-D-ribose 1-phosphate at the expense of ATP. The sequence is that of Nicotinate phosphoribosyltransferase from Burkholderia ambifaria (strain MC40-6).